A 109-amino-acid chain; its full sequence is Large ribosomal subunit protein uL24 (109 aa).

The protein belongs to the universal ribosomal protein uL24 family. As to quaternary structure, part of the 50S ribosomal subunit.

In terms of biological role, one of two assembly initiator proteins, it binds directly to the 5'-end of the 23S rRNA, where it nucleates assembly of the 50S subunit. Its function is as follows. One of the proteins that surrounds the polypeptide exit tunnel on the outside of the subunit. The protein is Large ribosomal subunit protein uL24 of Rickettsia africae (strain ESF-5).